Here is a 127-residue protein sequence, read N- to C-terminus: UPF0212 protein VNG_1264C (127 aa).

It belongs to the UPF0212 family.

In Halobacterium salinarum (strain ATCC 700922 / JCM 11081 / NRC-1) (Halobacterium halobium), this protein is UPF0212 protein VNG_1264C.